Reading from the N-terminus, the 383-residue chain is Protein delta homolog 2 (383 aa).

Positions 1–26 are cleaved as a signal peptide; that stretch reads MPSGCRCLHLVCLLCILGAPGQPVRA. 4 EGF-like domains span residues 27–58, 62–89, 91–129, and 131–172; these read DDCSSHCDLAHGCCAPDGSCRCDPGWEGLHCE, RMPGCQHGTCHQPWQCICHSGWAGKFCD, DEHICTTQSPCQNGGQCMYDGGGEYHCVCLPGFHGRDCE, and KAGP…ARCE. At 27-306 the chain is on the extracellular side; that stretch reads DDCSSHCDLA…RQEAGLGEPS (280 aa). Intrachain disulfides connect cysteine 29–cysteine 40, cysteine 33–cysteine 46, cysteine 48–cysteine 57, cysteine 66–cysteine 71, cysteine 79–cysteine 88, cysteine 95–cysteine 107, cysteine 101–cysteine 117, cysteine 119–cysteine 128, cysteine 135–cysteine 148, cysteine 142–cysteine 160, cysteine 162–cysteine 171, cysteine 178–cysteine 189, cysteine 183–cysteine 198, cysteine 200–cysteine 209, cysteine 216–cysteine 227, cysteine 221–cysteine 236, and cysteine 238–cysteine 247. Asparagine 157 is a glycosylation site (N-linked (GlcNAc...) asparagine). The EGF-like 5; calcium-binding domain maps to 174–210; it reads NVDDCLMRPCANGATCLDGINRFSCLCPEGFAGRFCT. The EGF-like 6; calcium-binding domain occupies 212 to 248; it reads NLDDCASRPCQRGARCRDRVHDFDCLCPSGYGGKTCE. The chain crosses the membrane as a helical span at residues 307 to 327; that stretch reads LVALVVFGALTAALVLATVLL. Residues 328–383 are Cytoplasmic-facing; that stretch reads TLRAWRRGVCPPGPCCYPAPHYAPACQDQECQVSMLPAGLPLPRDLPPEPGKTTAL.

The protein resides in the membrane. Its function is as follows. Regulates adipogenesis. The chain is Protein delta homolog 2 (DLK2) from Homo sapiens (Human).